We begin with the raw amino-acid sequence, 38 residues long: Large ribosomal subunit protein bL36A (38 aa).

Belongs to the bacterial ribosomal protein bL36 family.

The sequence is that of Large ribosomal subunit protein bL36A from Pectobacterium atrosepticum (strain SCRI 1043 / ATCC BAA-672) (Erwinia carotovora subsp. atroseptica).